A 215-amino-acid chain; its full sequence is Large ribosomal subunit protein bL25 (215 aa).

Positions 190 to 215 are disordered; sequence VLTDAEEETDETPEEPEAIRQKGDEE. Over residues 193 to 205 the composition is skewed to acidic residues; sequence DAEEETDETPEEP. Residues 206–215 are compositionally biased toward basic and acidic residues; that stretch reads EAIRQKGDEE.

It belongs to the bacterial ribosomal protein bL25 family. CTC subfamily. In terms of assembly, part of the 50S ribosomal subunit; part of the 5S rRNA/L5/L18/L25 subcomplex. Contacts the 5S rRNA. Binds to the 5S rRNA independently of L5 and L18.

Its function is as follows. This is one of the proteins that binds to the 5S RNA in the ribosome where it forms part of the central protuberance. The polypeptide is Large ribosomal subunit protein bL25 (Maricaulis maris (strain MCS10) (Caulobacter maris)).